A 485-amino-acid chain; its full sequence is Serine/threonine-protein kinase 4 (485 aa).

Residues 30–281 (FDVLEKLGEG…ATELLQHPFI (252 aa)) enclose the Protein kinase domain. ATP-binding positions include 36–44 (LGEGSYGSV) and K59. Residue D149 is the Proton acceptor of the active site. T183 is modified (phosphothreonine; by autocatalysis). The SARAH domain maps to 431–478 (YSFLKDWSVAEVQLKLNSLDPMMEREIEEIHHKYQAKRQPILEAIESK).

The protein belongs to the protein kinase superfamily. STE Ser/Thr protein kinase family. STE20 subfamily. Homodimer; mediated via the coiled-coil region. The cofactor is Mg(2+). In terms of processing, autophosphorylated on Thr-183. Post-translationally, proteolytically cleaved by caspase-3 during apoptosis at Asp-326 resulting in a 37 kDa form. Proteolytic cleavage results in kinase activation and nuclear translocation of the truncated form (MST1/N).

It localises to the cytoplasm. The protein localises to the nucleus. The catalysed reaction is L-seryl-[protein] + ATP = O-phospho-L-seryl-[protein] + ADP + H(+). It catalyses the reaction L-threonyl-[protein] + ATP = O-phospho-L-threonyl-[protein] + ADP + H(+). Its activity is regulated as follows. The C-terminal non-catalytic region inhibits the kinase activity, the enzyme is activated by caspase-cleavage. Homodimerization and autophosphorylation of Thr-183 is also required for full activation. Stress-activated, pro-apoptotic kinase which, following caspase-cleavage, enters the nucleus and induces chromatin condensation followed by internucleosomal DNA fragmentation. Key component of the Hippo signaling pathway which plays a pivotal role in organ size control and tumor suppression by restricting proliferation and promoting apoptosis. The core of this pathway is composed of a kinase cascade wherein stk3/mst2 and stk4/mst1, in complex with its regulatory protein sav1, phosphorylates and activates lats1/2 in complex with its regulatory protein mob1, which in turn phosphorylates and inactivates yap1 oncoprotein and wwtr1/taz. Phosphorylation of yap1 by lats2 inhibits its translocation into the nucleus to regulate cellular genes important for cell proliferation, cell death, and cell migration. Phosphorylates 'Ser-14' of histone H2B (H2BS14ph) during apoptosis. The sequence is that of Serine/threonine-protein kinase 4 (stk4) from Xenopus laevis (African clawed frog).